Reading from the N-terminus, the 122-residue chain is UPF0102 protein Cgl2031/cg2228 (122 aa).

The protein belongs to the UPF0102 family.

This is UPF0102 protein Cgl2031/cg2228 from Corynebacterium glutamicum (strain ATCC 13032 / DSM 20300 / JCM 1318 / BCRC 11384 / CCUG 27702 / LMG 3730 / NBRC 12168 / NCIMB 10025 / NRRL B-2784 / 534).